The primary structure comprises 287 residues: Hydroxysteroid 11-beta-dehydrogenase 1-like protein (287 aa).

Positions 1–22 (MKLYAKLLLCSICVAFIAVRWS) are cleaved as a signal peptide. NADP(+) contacts are provided by residues 40-66 (GASTGIGEQLAYHYARLGAQIVITARR), 91-92 (DM), and 118-120 (NHI). Serine 169 serves as a coordination point for substrate. Tyrosine 182 acts as the Proton acceptor in catalysis. Residues 182 to 186 (YASTK) and 215 to 221 (GLIDTDS) each bind NADP(+).

Belongs to the short-chain dehydrogenases/reductases (SDR) family.

Its subcellular location is the secreted. The enzyme catalyses cortisone + NADPH + H(+) = cortisol + NADP(+). Unidirectional NADP(+)-dependent cortisol dehydrogenase (in vitro). This Danio rerio (Zebrafish) protein is Hydroxysteroid 11-beta-dehydrogenase 1-like protein (hsd11b1l).